The following is a 61-amino-acid chain: Small ribosomal subunit protein uS14 (61 aa).

Residues cysteine 24, cysteine 27, cysteine 40, and cysteine 43 each contribute to the Zn(2+) site.

Belongs to the universal ribosomal protein uS14 family. Zinc-binding uS14 subfamily. As to quaternary structure, part of the 30S ribosomal subunit. Contacts proteins S3 and S10. The cofactor is Zn(2+).

In terms of biological role, binds 16S rRNA, required for the assembly of 30S particles and may also be responsible for determining the conformation of the 16S rRNA at the A site. This is Small ribosomal subunit protein uS14 from Clostridium botulinum (strain 657 / Type Ba4).